The sequence spans 284 residues: Diaminopimelate epimerase (284 aa).

Asn14 and Asn67 together coordinate substrate. Catalysis depends on Cys76, which acts as the Proton donor. Substrate contacts are provided by residues 77 to 78 (GN), Asn166, Asn199, and 217 to 218 (ER). Cys226 functions as the Proton acceptor in the catalytic mechanism. Position 227 to 228 (227 to 228 (GT)) interacts with substrate.

The protein belongs to the diaminopimelate epimerase family. As to quaternary structure, homodimer.

Its subcellular location is the cytoplasm. The catalysed reaction is (2S,6S)-2,6-diaminopimelate = meso-2,6-diaminopimelate. Its pathway is amino-acid biosynthesis; L-lysine biosynthesis via DAP pathway; DL-2,6-diaminopimelate from LL-2,6-diaminopimelate: step 1/1. Its function is as follows. Catalyzes the stereoinversion of LL-2,6-diaminopimelate (L,L-DAP) to meso-diaminopimelate (meso-DAP), a precursor of L-lysine and an essential component of the bacterial peptidoglycan. The polypeptide is Diaminopimelate epimerase (Bacillus subtilis (strain 168)).